A 301-amino-acid polypeptide reads, in one-letter code: Sulfate adenylyltransferase subunit 2 (301 aa).

The disordered stretch occupies residues Arg279 to Phe301.

The protein belongs to the PAPS reductase family. CysD subfamily. In terms of assembly, heterodimer composed of CysD, the smaller subunit, and CysN.

It carries out the reaction sulfate + ATP + H(+) = adenosine 5'-phosphosulfate + diphosphate. It functions in the pathway sulfur metabolism; hydrogen sulfide biosynthesis; sulfite from sulfate: step 1/3. In terms of biological role, with CysN forms the ATP sulfurylase (ATPS) that catalyzes the adenylation of sulfate producing adenosine 5'-phosphosulfate (APS) and diphosphate, the first enzymatic step in sulfur assimilation pathway. APS synthesis involves the formation of a high-energy phosphoric-sulfuric acid anhydride bond driven by GTP hydrolysis by CysN coupled to ATP hydrolysis by CysD. The protein is Sulfate adenylyltransferase subunit 2 of Geotalea uraniireducens (strain Rf4) (Geobacter uraniireducens).